The chain runs to 386 residues: Methylthioribose-1-phosphate isomerase (386 aa).

Asp261 functions as the Proton donor in the catalytic mechanism.

Belongs to the eIF-2B alpha/beta/delta subunits family. MtnA subfamily.

It localises to the cytoplasm. The protein resides in the nucleus. The catalysed reaction is 5-(methylsulfanyl)-alpha-D-ribose 1-phosphate = 5-(methylsulfanyl)-D-ribulose 1-phosphate. It functions in the pathway amino-acid biosynthesis; L-methionine biosynthesis via salvage pathway; L-methionine from S-methyl-5-thio-alpha-D-ribose 1-phosphate: step 1/6. In terms of biological role, catalyzes the interconversion of methylthioribose-1-phosphate (MTR-1-P) into methylthioribulose-1-phosphate (MTRu-1-P). The protein is Methylthioribose-1-phosphate isomerase of Paracoccidioides brasiliensis (strain Pb03).